The sequence spans 585 residues: Serine/threonine-protein kinase Nek3 (585 aa).

Residues 4–258 (YEVLEQIGKG…AAELLKHPHL (255 aa)) enclose the Protein kinase domain. ATP contacts are provided by residues 10 to 18 (IGKGSFGSA) and lysine 33. Aspartate 129 functions as the Proton acceptor in the catalytic mechanism. 2 disordered regions span residues 354–413 (GNHS…TPVN) and 489–511 (DSSKNHTGDSSDPSILGTDSNPL). 2 stretches are compositionally biased toward polar residues: residues 400 to 413 (RASQPTRRASTPVN) and 498 to 511 (SSDPSILGTDSNPL).

Belongs to the protein kinase superfamily. NEK Ser/Thr protein kinase family. NIMA subfamily. In terms of assembly, interacts with PLIM2B. Expressed in pollen grains.

It carries out the reaction L-seryl-[protein] + ATP = O-phospho-L-seryl-[protein] + ADP + H(+). It catalyses the reaction L-threonyl-[protein] + ATP = O-phospho-L-threonyl-[protein] + ADP + H(+). May be involved in plant development processes. May function downstream of DCW11 in retrograde signaling from the mitochondria to the nucleus. Seems to be involved in the mechanism of cytoplasmic male sterility (CMS) occurrence. In Oryza sativa subsp. japonica (Rice), this protein is Serine/threonine-protein kinase Nek3.